Reading from the N-terminus, the 265-residue chain is Di-trans,poly-cis-undecaprenyl-diphosphate synthase (265 aa).

The short motif at 236 to 238 (RFG) is the RXG motif; crucial for prenyltransferase activity element.

This sequence belongs to the UPP synthase family. Mg(2+) serves as cofactor.

The catalysed reaction is 8 isopentenyl diphosphate + (2E,6E)-farnesyl diphosphate = di-trans,octa-cis-undecaprenyl diphosphate + 8 diphosphate. The protein operates within protein modification; protein glycosylation. It functions in the pathway lipid metabolism. Cis-prenyl transferase involved in the synthesis of dolichol, a long-chain polyprenol that is utilized as a sugar carrier in protein glycosylation in the endoplasmic reticulum (ER). Catalyzes the sequential condensation of isopentenyl pyrophosphate (IPP) with farnesyl pyrophosphate (FPP) to produce a polyprenyl pyrophosphate which contains 11 (major) and 12 (minor) isoprene units. This chain is Di-trans,poly-cis-undecaprenyl-diphosphate synthase, found in Giardia intestinalis (strain ATCC 50803 / WB clone C6) (Giardia lamblia).